A 136-amino-acid chain; its full sequence is Large ribosomal subunit protein uL16 (136 aa).

It belongs to the universal ribosomal protein uL16 family. Part of the 50S ribosomal subunit.

Functionally, binds 23S rRNA and is also seen to make contacts with the A and possibly P site tRNAs. The sequence is that of Large ribosomal subunit protein uL16 from Aggregatibacter actinomycetemcomitans (Actinobacillus actinomycetemcomitans).